We begin with the raw amino-acid sequence, 214 residues long: MSGYFITFEGGEGVGKTTQISLLAQYLRNQGYDVLTTREPGGTVGAEAIRHILLSGQAQNYGPLIEVILLTAARIDHITEVIAPSLQKGKIVLCDRFIDSTRVYQGLNNTVGSSVLSVLEYVALNGIMPCLTFLLDIPARCGMERANLRRKKAETIDYFEKDELKIQEQRRQAFLQLAKQEPHRFRVIDATGAMEVIAQQIKNICHQVILDQVP.

10-17 provides a ligand contact to ATP; that stretch reads GGEGVGKT.

This sequence belongs to the thymidylate kinase family.

It carries out the reaction dTMP + ATP = dTDP + ADP. Functionally, phosphorylation of dTMP to form dTDP in both de novo and salvage pathways of dTTP synthesis. This is Thymidylate kinase from Bartonella quintana (strain Toulouse) (Rochalimaea quintana).